A 155-amino-acid chain; its full sequence is MSRQSTVEKKIEKFDPIYHNRLVNMVVNRILKHGKKSLAYRIFYQSLKKIQQKTEKNPLIVLRQAIQKLTPKLIVKSRRVSGSTYQVPIEIKKKEGKILAIRWLLESSRKRSGRNMHFKLSYEIMDAAREKGNAIRKKEEIHKMAESNKAFAHYH.

Belongs to the universal ribosomal protein uS7 family. As to quaternary structure, part of the 30S ribosomal subunit.

The protein resides in the plastid. The protein localises to the chloroplast. Its function is as follows. One of the primary rRNA binding proteins, it binds directly to 16S rRNA where it nucleates assembly of the head domain of the 30S subunit. In Cryptomeria japonica (Japanese cedar), this protein is Small ribosomal subunit protein uS7c (rps7).